The sequence spans 130 residues: Small ribosomal subunit protein uS11 (130 aa).

The protein belongs to the universal ribosomal protein uS11 family. As to quaternary structure, part of the 30S ribosomal subunit. Interacts with proteins S7 and S18. Binds to IF-3.

Functionally, located on the platform of the 30S subunit, it bridges several disparate RNA helices of the 16S rRNA. Forms part of the Shine-Dalgarno cleft in the 70S ribosome. This Thermoanaerobacter sp. (strain X514) protein is Small ribosomal subunit protein uS11.